A 179-amino-acid chain; its full sequence is uncharacterized protein (179 aa).

It is found in the virion. This is an uncharacterized protein from Acanthamoeba polyphaga (Amoeba).